The chain runs to 123 residues: Dormancy-associated protein homolog 4 (123 aa).

A disordered region spans residues 7 to 86; that stretch reads LWDETVAGPT…NPGTPLTPGT (80 aa). Residues 30 to 46 show a composition bias toward low complexity; the sequence is LSTVRSSPPSLSSDQVT. Composition is skewed to polar residues over residues 47 to 58 and 71 to 80; these read RSIMVTKGNNNV and PTCSSSNPGT. The residue at position 74 (Ser-74) is a Phosphoserine.

Belongs to the DRM1/ARP family.

The chain is Dormancy-associated protein homolog 4 from Arabidopsis thaliana (Mouse-ear cress).